Consider the following 403-residue polypeptide: Decapping and exoribonuclease protein 1 (403 aa).

Glu223 contacts a divalent metal cation. Glu260 is a binding site for substrate. Residues Asp262, Glu273, and Ile274 each coordinate a divalent metal cation. 2 residues coordinate substrate: Lys275 and Gln297.

The protein belongs to the DXO/Dom3Z family. A divalent metal cation is required as a cofactor.

The protein resides in the cytoplasm. It carries out the reaction a 5'-end NAD(+)-phospho-ribonucleoside in mRNA + H2O = a 5'-end phospho-ribonucleoside in mRNA + NAD(+) + H(+). The catalysed reaction is a 5'-end (N(7)-methyl 5'-triphosphoguanosine)-ribonucleoside-ribonucleotide in mRNA + H2O = a (N(7)-methyl 5'-triphosphoguanosine)-nucleoside + a 5'-end phospho-ribonucleoside in mRNA + H(+). Its function is as follows. Decapping enzyme for NAD-capped RNAs: specifically hydrolyzes the nicotinamide adenine dinucleotide (NAD) cap from a subset of RNAs by removing the entire NAD moiety from the 5'-end of an NAD-capped RNA. The NAD-cap is present at the 5'-end of some RNAs and snoRNAs. In contrast to the canonical 5'-end N7 methylguanosine (m7G) cap, the NAD cap promotes mRNA decay. Also acts as a non-canonical decapping enzyme that removes the entire cap structure of m7G capped or incompletely capped RNAs and mediates their subsequent degradation. Has decapping and 5'-3' exonuclease activities. Has decapping activity toward incomplete 5'-end cap mRNAs such as unmethylated 5'-end-capped RNA to release GpppN and 5'-end monophosphate RNA. The 5'-end monophosphate RNA is then degraded by the 5'-3' exoribonuclease activity, enabling this enzyme to decap and degrade incompletely capped mRNAs. The polypeptide is Decapping and exoribonuclease protein 1 (Kluyveromyces lactis (strain ATCC 8585 / CBS 2359 / DSM 70799 / NBRC 1267 / NRRL Y-1140 / WM37) (Yeast)).